Reading from the N-terminus, the 580-residue chain is Isocitrate lyase (580 aa).

Residue 106-108 (SGW) coordinates substrate. Position 177 (D177) interacts with Mg(2+). Catalysis depends on C215, which acts as the Proton acceptor. Residues 216–217 (GH), R252, 441–445 (NLSPS), and T476 each bind substrate. The short motif at 578-580 (SRM) is the Microbody targeting signal element.

It belongs to the isocitrate lyase/PEP mutase superfamily. Isocitrate lyase family. As to quaternary structure, homotetramer. Mg(2+) is required as a cofactor.

It is found in the glyoxysome. The enzyme catalyses D-threo-isocitrate = glyoxylate + succinate. It functions in the pathway carbohydrate metabolism; glyoxylate cycle; (S)-malate from isocitrate: step 1/2. In terms of biological role, involved in storage lipid mobilization during the growth of higher plant seedling. This chain is Isocitrate lyase (ICL 8), found in Pinus taeda (Loblolly pine).